Reading from the N-terminus, the 246-residue chain is Bis(5'-nucleosyl)-tetraphosphatase PrpE [asymmetrical] (246 aa).

Belongs to the PrpE family. Requires Ni(2+) as cofactor.

It carries out the reaction P(1),P(4)-bis(5'-guanosyl) tetraphosphate + H2O = GMP + GTP + 2 H(+). Its function is as follows. Asymmetrically hydrolyzes Ap4p to yield AMP and ATP. The chain is Bis(5'-nucleosyl)-tetraphosphatase PrpE [asymmetrical] from Bacillus cereus (strain Q1).